A 449-amino-acid polypeptide reads, in one-letter code: NADH-quinone oxidoreductase subunit D (449 aa).

The protein belongs to the complex I 49 kDa subunit family. In terms of assembly, NDH-1 is composed of 14 different subunits. Subunits NuoB, C, D, E, F, and G constitute the peripheral sector of the complex.

It is found in the cell membrane. The catalysed reaction is a quinone + NADH + 5 H(+)(in) = a quinol + NAD(+) + 4 H(+)(out). Its function is as follows. NDH-1 shuttles electrons from NADH, via FMN and iron-sulfur (Fe-S) centers, to quinones in the respiratory chain. The immediate electron acceptor for the enzyme in this species is believed to be a menaquinone. Couples the redox reaction to proton translocation (for every two electrons transferred, four hydrogen ions are translocated across the cytoplasmic membrane), and thus conserves the redox energy in a proton gradient. This Saccharopolyspora erythraea (strain ATCC 11635 / DSM 40517 / JCM 4748 / NBRC 13426 / NCIMB 8594 / NRRL 2338) protein is NADH-quinone oxidoreductase subunit D.